We begin with the raw amino-acid sequence, 209 residues long: Egg case collagen (209 aa).

A nonhelical region region spans residues 1 to 129 (VYMSGXGKPP…YKGNHGFYLV (129 aa)). Residues 130–209 (LPAGYPGTPG…DPGLPGEYGV (80 aa)) are triple-helical region. Residues 138–209 (PGTPGPRGGP…DPGLPGEYGV (72 aa)) are disordered. Gly residues predominate over residues 142–162 (GPRGGPGDPGMPGEPGVGFPG).

In terms of biological role, major component of the egg case wall which is secreted by the oviduct. The egg case combines mechanical strength and toughness with high permeability to small molecules and ions. The sequence is that of Egg case collagen from Scyliorhinus canicula (Small-spotted catshark).